Reading from the N-terminus, the 467-residue chain is Flagellum-specific ATP synthase (467 aa).

180–187 contributes to the ATP binding site; the sequence is AGSGVGKS.

It belongs to the ATPase alpha/beta chains family.

It is found in the cytoplasm. The enzyme catalyses ATP + H2O + 4 H(+)(in) = ADP + phosphate + 5 H(+)(out). Functionally, probable catalytic subunit of a protein translocase for flagellum-specific export, or a proton translocase involved in local circuits at the flagellum. The sequence is that of Flagellum-specific ATP synthase (fliI) from Rhizobium meliloti (strain 1021) (Ensifer meliloti).